The following is a 250-amino-acid chain: Transcriptional activator protein ExpR (250 aa).

The region spanning 173–238 (KSQEADLFSQ…HAIRLGVEMN (66 aa)) is the HTH luxR-type domain. The segment at residues 197-216 (YQEIALILGITTSTVKFHIG) is a DNA-binding region (H-T-H motif).

It belongs to the autoinducer-regulated transcriptional regulatory protein family.

Functionally, functions as an OHLL responsive transcriptional regulator that acts in virulence (soft rot disease) through the activation of genes for plant tissue macerating enzymes. The polypeptide is Transcriptional activator protein ExpR (expR) (Dickeya dadantii (strain 3937) (Erwinia chrysanthemi (strain 3937))).